The primary structure comprises 111 residues: Fluoride-specific ion channel FluC 3 (111 aa).

3 helical membrane-spanning segments follow: residues 26 to 46 (IPAG…LLTF), 53 to 73 (VVYL…TFAY), and 91 to 111 (IFLN…ALML). Na(+) contacts are provided by Gly63 and Thr66.

The protein belongs to the fluoride channel Fluc/FEX (TC 1.A.43) family.

The protein localises to the cell membrane. The enzyme catalyses fluoride(in) = fluoride(out). Its activity is regulated as follows. Na(+) is not transported, but it plays an essential structural role and its presence is essential for fluoride channel function. In terms of biological role, fluoride-specific ion channel. Important for reducing fluoride concentration in the cell, thus reducing its toxicity. In Methanosarcina acetivorans (strain ATCC 35395 / DSM 2834 / JCM 12185 / C2A), this protein is Fluoride-specific ion channel FluC 3.